The sequence spans 201 residues: 3-isopropylmalate dehydratase small subunit (201 aa).

The protein belongs to the LeuD family. LeuD type 1 subfamily. As to quaternary structure, heterodimer of LeuC and LeuD.

It catalyses the reaction (2R,3S)-3-isopropylmalate = (2S)-2-isopropylmalate. The protein operates within amino-acid biosynthesis; L-leucine biosynthesis; L-leucine from 3-methyl-2-oxobutanoate: step 2/4. In terms of biological role, catalyzes the isomerization between 2-isopropylmalate and 3-isopropylmalate, via the formation of 2-isopropylmaleate. This is 3-isopropylmalate dehydratase small subunit from Shewanella frigidimarina (strain NCIMB 400).